A 422-amino-acid polypeptide reads, in one-letter code: Nuclear hormone receptor family member nhr-54 (422 aa).

The nuclear receptor DNA-binding region spans 14–92 (SVKCAICYKA…LGMTTENVRT (79 aa)). 2 consecutive NR C4-type zinc fingers follow at residues 17–37 (CAIC…CRAC) and 53–80 (CTRK…FKKC). An NR LBD domain is found at 161–422 (PDDDVIVELN…VFTEPEFFRV (262 aa)).

It belongs to the nuclear hormone receptor family.

It localises to the nucleus. Functionally, orphan nuclear receptor. This is Nuclear hormone receptor family member nhr-54 (nhr-54) from Caenorhabditis elegans.